The sequence spans 249 residues: Fatty acid elongase 5 (249 aa).

3 helical membrane passes run 23 to 43 (VFVNYPVLIGCHIGYLVVIVL), 68 to 88 (VALSLVMAINLGQFLVYGVFN), and 100 to 120 (WIFVHYATKFLDMFDTYFIVL). Residues 131–135 (HIYHH) carry the HxxHH motif motif. H134 functions as the Nucleophile in the catalytic mechanism. 4 consecutive transmembrane segments (helical) span residues 138–158 (IGFIWGLLLHHGVANGTAFFG), 159–179 (AWINSAVHALMYFHYLYTSLG), 193–213 (MIQFALCILHAVLAVVAHSPI), and 217–236 (WAVLQLCYHLTLLYLFMRFY).

This sequence belongs to the ELO family.

It is found in the membrane. The enzyme catalyses an acyl-CoA + malonyl-CoA + H(+) = a 3-oxoacyl-CoA + CO2 + CoA. It participates in lipid metabolism; polyunsaturated fatty acid biosynthesis. Functionally, involved in the synthesis of fatty acids. Elongates C20 polyunsaturated fatty acids (PUFAs) with a preference for n-6 PUFAs. This chain is Fatty acid elongase 5, found in Leishmania major.